Here is a 436-residue protein sequence, read N- to C-terminus: 3-ketoacyl-CoA thiolase (436 aa).

Cysteine 99 (acyl-thioester intermediate) is an active-site residue. Residues histidine 392 and cysteine 422 each act as proton acceptor in the active site.

Belongs to the thiolase-like superfamily. Thiolase family. Heterotetramer of two alpha chains (FadJ) and two beta chains (FadI).

It localises to the cytoplasm. It carries out the reaction an acyl-CoA + acetyl-CoA = a 3-oxoacyl-CoA + CoA. Its pathway is lipid metabolism; fatty acid beta-oxidation. Catalyzes the final step of fatty acid oxidation in which acetyl-CoA is released and the CoA ester of a fatty acid two carbons shorter is formed. This chain is 3-ketoacyl-CoA thiolase, found in Shigella boydii serotype 18 (strain CDC 3083-94 / BS512).